Reading from the N-terminus, the 548-residue chain is Inosine-5'-monophosphate dehydrogenase (548 aa).

2 consecutive CBS domains span residues 121 to 201 and 205 to 261; these read FILD…EDPV and MSTE…PLAS. Residues 298 to 300 and 348 to 350 contribute to the NAD(+) site; these read DSS and GMG. K(+) is bound by residues G350 and G352. S353 lines the IMP pocket. C355 contacts K(+). C355 functions as the Thioimidate intermediate in the catalytic mechanism. Residues 388-390 and 411-412 contribute to the IMP site; these read DGG and GS. Catalysis depends on R461, which acts as the Proton acceptor. Q473 serves as a coordination point for IMP. The disordered stretch occupies residues 527-548; it reads ASAQTEGNVHGLHSHEKKLYSS. Residue S528 participates in K(+) binding. Residues 539-548 are compositionally biased toward basic and acidic residues; it reads HSHEKKLYSS.

Belongs to the IMPDH/GMPR family. As to quaternary structure, homotetramer. Requires K(+) as cofactor.

It is found in the cytoplasm. The catalysed reaction is IMP + NAD(+) + H2O = XMP + NADH + H(+). The protein operates within purine metabolism; XMP biosynthesis via de novo pathway; XMP from IMP: step 1/1. Mycophenolic acid (MPA) is a non-competitive inhibitor that prevents formation of the closed enzyme conformation by binding to the same site as the amobile flap. In contrast, mizoribine monophosphate (MZP) is a competitive inhibitor that induces the closed conformation. MPA is a potent inhibitor of mammalian IMPDHs but a poor inhibitor of the bacterial enzymes. MZP is a more potent inhibitor of bacterial IMPDH. In terms of biological role, catalyzes the conversion of inosine 5'-phosphate (IMP) to xanthosine 5'-phosphate (XMP), the first committed and rate-limiting step in the de novo synthesis of guanine nucleotides, and therefore plays an important role in the regulation of cell growth. Part of the gene cluster that mediates the biosynthesis of mycophenolic acid (MPA), the first isolated antibiotic natural product in the world. Does not play a role in the biosynthesis of MPA, but is involved in self resistance to MPA, since MPA acts as an inhibitor of IMP dehydrogenases. This chain is Inosine-5'-monophosphate dehydrogenase, found in Penicillium brevicompactum.